The primary structure comprises 215 residues: 3-dehydroquinate dehydratase (215 aa).

3-dehydroquinate contacts are provided by residues S6, 31–33 (ELR), and R64. H111 acts as the Proton donor/acceptor in catalysis. The active-site Schiff-base intermediate with substrate is K138. The 3-dehydroquinate site is built by R174, T193, and Q197.

Belongs to the type-I 3-dehydroquinase family. In terms of assembly, homodimer.

It catalyses the reaction 3-dehydroquinate = 3-dehydroshikimate + H2O. Its pathway is metabolic intermediate biosynthesis; chorismate biosynthesis; chorismate from D-erythrose 4-phosphate and phosphoenolpyruvate: step 3/7. Involved in the third step of the chorismate pathway, which leads to the biosynthesis of aromatic amino acids. Catalyzes the cis-dehydration of 3-dehydroquinate (DHQ) and introduces the first double bond of the aromatic ring to yield 3-dehydroshikimate. The polypeptide is 3-dehydroquinate dehydratase (Ignicoccus hospitalis (strain KIN4/I / DSM 18386 / JCM 14125)).